A 432-amino-acid polypeptide reads, in one-letter code: Alkaline protease secretion protein AprE (432 aa).

At 1–14 (MTRTVKRDENAYAR) the chain is on the cytoplasmic side. Residues 15 to 36 (LGWLLVLFGFGGALLWAAFAPL) form a helical membrane-spanning segment. The Periplasmic portion of the chain corresponds to 37–432 (DQGVAVPATV…DRAHVALAEN (396 aa)).

Belongs to the membrane fusion protein (MFP) (TC 8.A.1) family.

The protein localises to the cell inner membrane. Its function is as follows. Involved in the secretion of alkaline protease. The polypeptide is Alkaline protease secretion protein AprE (aprE) (Pseudomonas aeruginosa (strain ATCC 15692 / DSM 22644 / CIP 104116 / JCM 14847 / LMG 12228 / 1C / PRS 101 / PAO1)).